We begin with the raw amino-acid sequence, 443 residues long: Chorionicgonadotropic hormone-like protein (443 aa).

The span at 263–286 shows a compositional bias: basic residues; that stretch reads RCAGRPCPRRHRRPCNASKSHRPM. Residues 263-292 form a disordered region; sequence RCAGRPCPRRHRRPCNASKSHRPMRMQQRD.

It to mammalian CGHB.

Its subcellular location is the secreted. The protein localises to the cell wall. Functionally, cell wall protein that resembles the beta subunit of human chorionic gonadotropin. Stimulates growth and change in morphology. The polypeptide is Chorionicgonadotropic hormone-like protein (xcg) (Stenotrophomonas maltophilia (Pseudomonas maltophilia)).